A 141-amino-acid chain; its full sequence is Regulator of ribonuclease activity B (141 aa).

The tract at residues 112 to 141 is disordered; it reads GTYFEDPNAPDDEDDNDDLFPPEEDEPRLH. Residues 119-141 are compositionally biased toward acidic residues; it reads NAPDDEDDNDDLFPPEEDEPRLH.

The protein belongs to the RraB family. As to quaternary structure, interacts with the C-terminal region of Rne.

The protein localises to the cytoplasm. Its function is as follows. Globally modulates RNA abundance by binding to RNase E (Rne) and regulating its endonucleolytic activity. Can modulate Rne action in a substrate-dependent manner by altering the composition of the degradosome. The chain is Regulator of ribonuclease activity B from Xenorhabdus nematophila (strain ATCC 19061 / DSM 3370 / CCUG 14189 / LMG 1036 / NCIMB 9965 / AN6).